Consider the following 246-residue polypeptide: 23S rRNA (guanosine-2'-O-)-methyltransferase RlmB (246 aa).

Residues G197, I217, and L226 each contribute to the S-adenosyl-L-methionine site.

Belongs to the class IV-like SAM-binding methyltransferase superfamily. RNA methyltransferase TrmH family. RlmB subfamily.

It is found in the cytoplasm. The enzyme catalyses guanosine(2251) in 23S rRNA + S-adenosyl-L-methionine = 2'-O-methylguanosine(2251) in 23S rRNA + S-adenosyl-L-homocysteine + H(+). Specifically methylates the ribose of guanosine 2251 in 23S rRNA. This is 23S rRNA (guanosine-2'-O-)-methyltransferase RlmB from Haemophilus ducreyi (strain 35000HP / ATCC 700724).